A 360-amino-acid chain; its full sequence is MKDSIINKLESLSERHEELQALLGDPSVINDQDKFRAYSKEYSQLEEVVTTFNRWKKLNSDIEEAQILLDDPDMKEMAAEEIAENKAEIENLEQHLQILLLPKDPNDEYNAFLEIRAGTGGDEAGIFAGDLYRMYSRYCESKRWRIEEMSANESEQGGYKEIIVKISGEGVYGQLKFESGGHRVQRVPKTESQGRIHTSACTVAVMPELPESEMPEINPTDLRIDTYRSSGAGGQHVNTTDSAVRITHIPTGIVVECQDERSQHKNKAKALAVLASRIVQVEQERQAAEQADTRRNLLGSGDRSDKIRTYNYPQGRVTDHRINLTVYRLDEVMNGKIDELIQPIITEYQADQLAALSEQA.

Gln-235 carries the post-translational modification N5-methylglutamine. Over residues 285–295 (RQAAEQADTRR) the composition is skewed to basic and acidic residues. Residues 285 to 309 (RQAAEQADTRRNLLGSGDRSDKIRT) are disordered.

This sequence belongs to the prokaryotic/mitochondrial release factor family. In terms of processing, methylated by PrmC. Methylation increases the termination efficiency of RF1.

It is found in the cytoplasm. Peptide chain release factor 1 directs the termination of translation in response to the peptide chain termination codons UAG and UAA. This chain is Peptide chain release factor 1, found in Actinobacillus pleuropneumoniae serotype 7 (strain AP76).